A 91-amino-acid chain; its full sequence is UPF0512 protein F (91 aa).

It belongs to the UPF0512 family.

The polypeptide is UPF0512 protein F (Dictyostelium discoideum (Social amoeba)).